Reading from the N-terminus, the 644-residue chain is Chaperone protein DnaK (644 aa).

Threonine 199 bears the Phosphothreonine; by autocatalysis mark. Residues 603–644 (YAKKSSEGQAAQGQTQSQESTKPAEEGVVDAEFEEVKEEDKK) are disordered. Over residues 609 to 623 (EGQAAQGQTQSQEST) the composition is skewed to polar residues. Positions 629–644 (GVVDAEFEEVKEEDKK) are enriched in acidic residues.

Belongs to the heat shock protein 70 family.

Acts as a chaperone. This chain is Chaperone protein DnaK, found in Legionella pneumophila (strain Corby).